A 532-amino-acid chain; its full sequence is Bifunctional purine biosynthesis protein PurH (532 aa).

The 147-residue stretch at 1–147 (MADRPIRQAL…KNHKDVAIVV (147 aa)) folds into the MGS-like domain.

Belongs to the PurH family.

It carries out the reaction (6R)-10-formyltetrahydrofolate + 5-amino-1-(5-phospho-beta-D-ribosyl)imidazole-4-carboxamide = 5-formamido-1-(5-phospho-D-ribosyl)imidazole-4-carboxamide + (6S)-5,6,7,8-tetrahydrofolate. The catalysed reaction is IMP + H2O = 5-formamido-1-(5-phospho-D-ribosyl)imidazole-4-carboxamide. It participates in purine metabolism; IMP biosynthesis via de novo pathway; 5-formamido-1-(5-phospho-D-ribosyl)imidazole-4-carboxamide from 5-amino-1-(5-phospho-D-ribosyl)imidazole-4-carboxamide (10-formyl THF route): step 1/1. It functions in the pathway purine metabolism; IMP biosynthesis via de novo pathway; IMP from 5-formamido-1-(5-phospho-D-ribosyl)imidazole-4-carboxamide: step 1/1. In Haemophilus influenzae (strain ATCC 51907 / DSM 11121 / KW20 / Rd), this protein is Bifunctional purine biosynthesis protein PurH.